A 184-amino-acid polypeptide reads, in one-letter code: Adenine phosphoribosyltransferase (184 aa).

The protein belongs to the purine/pyrimidine phosphoribosyltransferase family. In terms of assembly, homodimer.

Its subcellular location is the cytoplasm. The enzyme catalyses AMP + diphosphate = 5-phospho-alpha-D-ribose 1-diphosphate + adenine. It functions in the pathway purine metabolism; AMP biosynthesis via salvage pathway; AMP from adenine: step 1/1. In terms of biological role, catalyzes a salvage reaction resulting in the formation of AMP, that is energically less costly than de novo synthesis. The polypeptide is Adenine phosphoribosyltransferase (Shewanella putrefaciens (strain CN-32 / ATCC BAA-453)).